Consider the following 22-residue polypeptide: NADH dehydrogenase [ubiquinone] 1 alpha subcomplex subunit 9 (22 aa).

The interval 1–22 (ASNLATGGAGPLIXKGTGGRSS) is disordered.

This sequence belongs to the complex I NDUFA9 subunit family. As to quaternary structure, complex I is composed of about 45 different subunits. The cofactor is FAD.

Its subcellular location is the mitochondrion matrix. Accessory subunit of the mitochondrial membrane respiratory chain NADH dehydrogenase (Complex I), that is believed not to be involved in catalysis. Complex I functions in the transfer of electrons from NADH to the respiratory chain. The immediate electron acceptor for the enzyme is believed to be ubiquinone. The protein is NADH dehydrogenase [ubiquinone] 1 alpha subcomplex subunit 9 of Solanum tuberosum (Potato).